The primary structure comprises 184 residues: Tumor necrosis factor alpha-induced protein 8-like protein 2 (184 aa).

A Phosphoserine modification is found at serine 3.

The protein belongs to the TNFAIP8 family. TNFAIP8L2 subfamily. In terms of assembly, may interact with CASP8; however, such result is unclear since could not reproduce the interaction with CASP8. Interacts with RAC1. Post-translationally, phosphorylated by TAK1/MAP3K7; this phosphorylation triggers association with BTRC and subsequent ubiquitination and degradation. Ubiquitinated in a BTRC-depdent manner; leading to degradation mediated through the proteasome pathway.

The protein localises to the cytoplasm. It is found in the nucleus. It localises to the lysosome. Acts as a negative regulator of innate and adaptive immunity by maintaining immune homeostasis. Plays a regulatory role in the Toll-like signaling pathway by determining the strength of LPS-induced signaling and gene expression. Inhibits TCR-mediated T-cell activation and negatively regulate T-cell function to prevent hyperresponsiveness. Also inhibits autolysosome formation via negatively modulating MTOR activation by interacting with RAC1 and promoting the disassociation of the RAC1-MTOR complex. Plays an essential role in NK-cell biology by acting as a checkpoint and displaying an expression pattern correlating with NK-cell maturation process and by negatively regulating NK-cell maturation and antitumor immunity. Mechanistically, suppresses IL-15-triggered mTOR activity in NK-cells. The sequence is that of Tumor necrosis factor alpha-induced protein 8-like protein 2 (TNFAIP8L2) from Callithrix jacchus (White-tufted-ear marmoset).